A 306-amino-acid chain; its full sequence is Recombination-associated protein RdgC (306 aa).

The protein belongs to the RdgC family.

It is found in the cytoplasm. The protein resides in the nucleoid. Its function is as follows. May be involved in recombination. The polypeptide is Recombination-associated protein RdgC (Pseudomonas syringae pv. tomato (strain ATCC BAA-871 / DC3000)).